A 499-amino-acid chain; its full sequence is Probable cytosol aminopeptidase (499 aa).

Residues Lys271 and Asp276 each contribute to the Mn(2+) site. Residue Lys283 is part of the active site. Residues Asp294, Asp353, and Glu355 each coordinate Mn(2+). Residue Arg357 is part of the active site.

This sequence belongs to the peptidase M17 family. Mn(2+) is required as a cofactor.

It is found in the cytoplasm. The enzyme catalyses Release of an N-terminal amino acid, Xaa-|-Yaa-, in which Xaa is preferably Leu, but may be other amino acids including Pro although not Arg or Lys, and Yaa may be Pro. Amino acid amides and methyl esters are also readily hydrolyzed, but rates on arylamides are exceedingly low.. It carries out the reaction Release of an N-terminal amino acid, preferentially leucine, but not glutamic or aspartic acids.. Functionally, presumably involved in the processing and regular turnover of intracellular proteins. Catalyzes the removal of unsubstituted N-terminal amino acids from various peptides. In Bordetella parapertussis (strain 12822 / ATCC BAA-587 / NCTC 13253), this protein is Probable cytosol aminopeptidase.